A 606-amino-acid chain; its full sequence is Ribonucleoprotein PTB-binding 1 (606 aa).

The interval 1-41 (MAADVSVTHRPPLSPKSGAEVEAGDAAERRAPEEELPPLDP) is disordered. Ala-2 carries the N-acetylalanine modification. Phosphoserine is present on residues Ser-6 and Ser-14. A Nuclear localization signal motif is present at residues 45–60 (RKRLEHTERQFRNRRK). RRM domains lie at 59–130 (RKIL…LQPT), 132–210 (ALLC…WTDA), and 221–299 (RCLC…FCAP). An interaction with PTBP1 region spans residues 307-395 (LAALIAAQAT…QTQGQKKPGI (89 aa)). The interval 391–474 (KKPGILGDSP…PPAPVGLRGS (84 aa)) is disordered. The span at 453 to 462 (LGLGPPAAQL) shows a compositional bias: low complexity. Thr-463 is subject to Phosphothreonine. A Phosphoserine modification is found at Ser-474. Phosphothreonine is present on Pro-488. The disordered stretch occupies residues 519 to 564 (GLLGLSPGPNGHSHLLKVRAGGGDMQGWEAPAPQRPLTRPALPSVS). 2 positions are modified to phosphoserine: Ser-562 and His-567. The tract at residues 579-606 (CPRPSPAQKAAMWASTPRASAATTRTPT) is disordered. Over residues 592–606 (ASTPRASAATTRTPT) the composition is skewed to low complexity.

Interacts with PTBP1, RAVER2, VCL and ACTN1. Part of a complex containing RAVER1, VCL and ACTN1.

It is found in the nucleus. The protein localises to the cytoplasm. In terms of biological role, cooperates with PTBP1 to modulate regulated alternative splicing events. Promotes exon skipping. Cooperates with PTBP1 to modulate switching between mutually exclusive exons during maturation of the TPM1 pre-mRNA. This Homo sapiens (Human) protein is Ribonucleoprotein PTB-binding 1 (RAVER1).